A 336-amino-acid polypeptide reads, in one-letter code: Ultraviolet-sensitive opsin (336 aa).

The Extracellular segment spans residues 1-29 (MDAWTYQFGNLSKISPFEGPQYHLAPKWA). Asn-10 is a glycosylation site (N-linked (GlcNAc...) asparagine). Residues 30–54 (FYLQAAFMGFVFFVGTPLNAIVLFV) traverse the membrane as a helical segment. Over 55–66 (TMKYKKLRQPLN) the chain is Cytoplasmic. A helical membrane pass occupies residues 67–91 (YILVNISLGGFIFDTFSVSQVFFSA). Residues 92–106 (LRGYYFFGYTLCAME) are Extracellular-facing. Cys-103 and Cys-180 form a disulfide bridge. A helical membrane pass occupies residues 107-126 (AAMGSIAGLVTGWSLAVLAF). Over 127 to 145 (ERYVVICKPFGSFKFGQSQ) the chain is Cytoplasmic. The chain crosses the membrane as a helical span at residues 146-169 (ALGAVALTWIIGIGCATPPFWGWS). Residues 170–195 (RYIPEGIGTACGPDWYTKNEEYNTES) are Extracellular-facing. A helical membrane pass occupies residues 196 to 223 (YTYFLLVSCFMMPIMIITFSYSQLLGAL). Over 224-245 (RAVAAQQAESASTQKAEKEVSR) the chain is Cytoplasmic. Residues 246 to 269 (MVVVMVGSFVVCYGPYAITALYFS) traverse the membrane as a helical segment. Residues 270 to 277 (YAEDSNKD) are Extracellular-facing. A helical membrane pass occupies residues 278 to 302 (YRLVAIPSLFSKSSCVYNPLIYAFM). At Lys-289 the chain carries N6-(retinylidene)lysine. The Cytoplasmic portion of the chain corresponds to 303-336 (NKQFNACIMETVFGKKIDESSEVSSKTETSSVSA).

This sequence belongs to the G-protein coupled receptor 1 family. Opsin subfamily. In terms of processing, phosphorylated on some or all of the serine and threonine residues present in the C-terminal region.

It is found in the membrane. Functionally, visual pigments are the light-absorbing molecules that mediate vision. They consist of an apoprotein, opsin, covalently linked to cis-retinal. This chain is Ultraviolet-sensitive opsin, found in Carassius auratus (Goldfish).